Reading from the N-terminus, the 58-residue chain is U11-myrmicitoxin-Tb1a (58 aa).

Residues 1-24 (LAMAMGDAVADAQARAMAAAYAIA) constitute a propeptide that is removed on maturation. The cysteines at positions 34 and 57 are disulfide-linked.

Belongs to the formicidae venom precursor-01 superfamily. As to expression, expressed by the venom gland.

The protein localises to the secreted. It is found in the target cell membrane. In terms of biological role, neurotoxin that causes irreversible rapid flaccid paralysis in blowflies and honeybees upon intrathoracic injection. Causes a quick and irreversible cytolytic effect (at 10 uM) indicating it possibly acts as a pore-forming peptide. Shows only weak effect on aphids (A.pisum) at high doses 24 hours post intrathoracic injection. In vitro, is not cytotoxic on the dipteran S2 Drosophila embryonic cell line. In Tetramorium bicarinatum (Tramp ant), this protein is U11-myrmicitoxin-Tb1a.